Consider the following 585-residue polypeptide: Aspartate--tRNA ligase (585 aa).

L-aspartate is bound at residue Glu173. Residues 197-200 (QTLK) are aspartate. Arg219 provides a ligand contact to L-aspartate. ATP is bound by residues 219–221 (RDE) and Gln228. Residue His446 coordinates L-aspartate. Glu480 contributes to the ATP binding site. Arg487 is an L-aspartate binding site. 532-535 (GLDR) contributes to the ATP binding site.

Belongs to the class-II aminoacyl-tRNA synthetase family. Type 1 subfamily. As to quaternary structure, homodimer.

The protein localises to the cytoplasm. The catalysed reaction is tRNA(Asp) + L-aspartate + ATP = L-aspartyl-tRNA(Asp) + AMP + diphosphate. Catalyzes the attachment of L-aspartate to tRNA(Asp) in a two-step reaction: L-aspartate is first activated by ATP to form Asp-AMP and then transferred to the acceptor end of tRNA(Asp). This Bacteroides fragilis (strain ATCC 25285 / DSM 2151 / CCUG 4856 / JCM 11019 / LMG 10263 / NCTC 9343 / Onslow / VPI 2553 / EN-2) protein is Aspartate--tRNA ligase.